A 620-amino-acid polypeptide reads, in one-letter code: Chaperone protein HscA homolog (620 aa).

Belongs to the heat shock protein 70 family.

Its function is as follows. Chaperone involved in the maturation of iron-sulfur cluster-containing proteins. Has a low intrinsic ATPase activity which is markedly stimulated by HscB. This is Chaperone protein HscA homolog from Shewanella sp. (strain MR-4).